A 383-amino-acid chain; its full sequence is Probable tRNA sulfurtransferase (383 aa).

The THUMP domain occupies 58 to 158 (NEIIHILKMI…ENKSYVWFDK (101 aa)). ATP contacts are provided by residues 176–177 (LL), 201–202 (TF), Arg-259, Gly-281, and Gln-290.

This sequence belongs to the ThiI family.

It is found in the cytoplasm. It catalyses the reaction [ThiI sulfur-carrier protein]-S-sulfanyl-L-cysteine + a uridine in tRNA + 2 reduced [2Fe-2S]-[ferredoxin] + ATP + H(+) = [ThiI sulfur-carrier protein]-L-cysteine + a 4-thiouridine in tRNA + 2 oxidized [2Fe-2S]-[ferredoxin] + AMP + diphosphate. The catalysed reaction is [ThiS sulfur-carrier protein]-C-terminal Gly-Gly-AMP + S-sulfanyl-L-cysteinyl-[cysteine desulfurase] + AH2 = [ThiS sulfur-carrier protein]-C-terminal-Gly-aminoethanethioate + L-cysteinyl-[cysteine desulfurase] + A + AMP + 2 H(+). The protein operates within cofactor biosynthesis; thiamine diphosphate biosynthesis. Functionally, catalyzes the ATP-dependent transfer of a sulfur to tRNA to produce 4-thiouridine in position 8 of tRNAs, which functions as a near-UV photosensor. Also catalyzes the transfer of sulfur to the sulfur carrier protein ThiS, forming ThiS-thiocarboxylate. This is a step in the synthesis of thiazole, in the thiamine biosynthesis pathway. The sulfur is donated as persulfide by IscS. This chain is Probable tRNA sulfurtransferase, found in Malacoplasma penetrans (strain HF-2) (Mycoplasma penetrans).